The sequence spans 272 residues: CD40 ligand (272 aa).

The Cytoplasmic segment spans residues 1–23; that stretch reads MNEAYSPAAPRPMGSTSPSTMKM. A helical; Signal-anchor for type II membrane protein membrane pass occupies residues 24 to 44; the sequence is FMCFLSVFMVVQTIGTVLFCL. Residues 45 to 272 are Extracellular-facing; that stretch reads YLHMKMDKME…GNTYFGMFKL (228 aa). N-linked (GlcNAc...) asparagine glycans are attached at residues Asn-124 and Asn-146. Positions 136 to 272 constitute a THD domain; that stretch reads IATHLAGVKS…GNTYFGMFKL (137 aa). Residues Cys-190 and Cys-229 are joined by a disulfide bond. Asn-251 carries an N-linked (GlcNAc...) asparagine glycan.

It belongs to the tumor necrosis factor family. As to quaternary structure, homotrimer. Interacts with CD28. CD40 ligand, soluble form: Exists as either a monomer or a homotrimer. Forms a ternary complex between CD40 and integrins for CD40-CD40LG signaling. The soluble form derives from the membrane form by proteolytic processing.

It localises to the cell membrane. The protein resides in the cell surface. It is found in the secreted. Functionally, cytokine that acts as a ligand to CD40/TNFRSF5. Costimulates T-cell proliferation and cytokine production. Induces the activation of NF-kappa-B. Mediates B-cell proliferation in the absence of co-stimulus as well as IgE production in the presence of IL4. Involved in immunoglobulin class switching. Its function is as follows. Acts as a ligand for integrins, specifically ITGA5:ITGB1 and ITGAV:ITGB3; both integrins and the CD40 receptor are required for activation of CD40-CD40LG signaling, which have cell-type dependent effects, such as B-cell activation, NF-kappa-B signaling and anti-apoptotic signaling. This is CD40 ligand (CD40LG) from Gallus gallus (Chicken).